Reading from the N-terminus, the 1391-residue chain is DNA-directed RNA polymerase subunit beta' (1391 aa).

Zn(2+) is bound by residues Cys-72, Cys-74, Cys-87, and Cys-90. 3 residues coordinate Mg(2+): Asp-462, Asp-464, and Asp-466. Zn(2+) is bound by residues Cys-816, Cys-890, Cys-897, and Cys-900.

This sequence belongs to the RNA polymerase beta' chain family. The RNAP catalytic core consists of 2 alpha, 1 beta, 1 beta' and 1 omega subunit. When a sigma factor is associated with the core the holoenzyme is formed, which can initiate transcription. It depends on Mg(2+) as a cofactor. The cofactor is Zn(2+).

The catalysed reaction is RNA(n) + a ribonucleoside 5'-triphosphate = RNA(n+1) + diphosphate. DNA-dependent RNA polymerase catalyzes the transcription of DNA into RNA using the four ribonucleoside triphosphates as substrates. The polypeptide is DNA-directed RNA polymerase subunit beta' (Neisseria meningitidis serogroup A / serotype 4A (strain DSM 15465 / Z2491)).